The following is a 407-amino-acid chain: 1-deoxy-D-xylulose 5-phosphate reductoisomerase (407 aa).

NADPH contacts are provided by T25, G26, S27, I28, N53, and N136. K137 serves as a coordination point for 1-deoxy-D-xylulose 5-phosphate. E138 is a binding site for NADPH. D162 contributes to the Mn(2+) binding site. Residues S163, E164, S188, and H211 each coordinate 1-deoxy-D-xylulose 5-phosphate. Position 164 (E164) interacts with Mn(2+). Residue G217 participates in NADPH binding. S224, N229, K230, and E233 together coordinate 1-deoxy-D-xylulose 5-phosphate. E233 contributes to the Mn(2+) binding site.

Belongs to the DXR family. Mg(2+) is required as a cofactor. It depends on Mn(2+) as a cofactor.

The enzyme catalyses 2-C-methyl-D-erythritol 4-phosphate + NADP(+) = 1-deoxy-D-xylulose 5-phosphate + NADPH + H(+). It participates in isoprenoid biosynthesis; isopentenyl diphosphate biosynthesis via DXP pathway; isopentenyl diphosphate from 1-deoxy-D-xylulose 5-phosphate: step 1/6. In terms of biological role, catalyzes the NADPH-dependent rearrangement and reduction of 1-deoxy-D-xylulose-5-phosphate (DXP) to 2-C-methyl-D-erythritol 4-phosphate (MEP). The polypeptide is 1-deoxy-D-xylulose 5-phosphate reductoisomerase (Rhodopseudomonas palustris (strain TIE-1)).